A 117-amino-acid chain; its full sequence is Probable glycerol dehydratase-reactivating factor small subunit (117 aa).

A Mg(2+)-binding site is contributed by Glu-31.

The protein belongs to the DdrB/PduH family. Member of the GDR complex, probably composed of DhaF(2)/DhaG(2). The cofactor is Mg(2+).

Small subunit of the glycerol dehydratase-reactivating factor (GDR), which reactivates suicidally inhibited adenosylcobalamin-dependent glycerol dehydratase. This is Probable glycerol dehydratase-reactivating factor small subunit from Citrobacter freundii.